Consider the following 82-residue polypeptide: Cytochrome b559 subunit alpha (82 aa).

A helical transmembrane segment spans residues 22-36 (IIHAVTLPAIFIAGF). Position 24 (histidine 24) interacts with heme.

The protein belongs to the PsbE/PsbF family. As to quaternary structure, heterodimer of an alpha subunit and a beta subunit. PSII is composed of 1 copy each of membrane proteins PsbA, PsbB, PsbC, PsbD, PsbE, PsbF, PsbH, PsbI, PsbJ, PsbK, PsbL, PsbM, PsbT, PsbX, PsbY, Psb30/Ycf12, peripheral proteins PsbO, CyanoQ (PsbQ), PsbU, PsbV and a large number of cofactors. It forms dimeric complexes. Requires heme b as cofactor.

The protein resides in the cellular thylakoid membrane. This b-type cytochrome is tightly associated with the reaction center of photosystem II (PSII). PSII is a light-driven water:plastoquinone oxidoreductase that uses light energy to abstract electrons from H(2)O, generating O(2) and a proton gradient subsequently used for ATP formation. It consists of a core antenna complex that captures photons, and an electron transfer chain that converts photonic excitation into a charge separation. In Prochlorococcus marinus (strain MIT 9211), this protein is Cytochrome b559 subunit alpha.